A 160-amino-acid polypeptide reads, in one-letter code: Protein shisa-like-2B (160 aa).

Residues 65-85 (IGALIGLGIAALVLLAFVISV) form a helical membrane-spanning segment.

The protein belongs to the shisa family.

The protein localises to the membrane. This chain is Protein shisa-like-2B, found in Homo sapiens (Human).